A 72-amino-acid chain; its full sequence is MGMRMMFTVFLLVVLATTVVSFPSDRASDGRDDEAKDERSDMHESDRNGRGCCCNPACGPNYGCGTSCSRTL.

The N-terminal stretch at methionine 1–serine 21 is a signal peptide. Positions phenylalanine 22–arginine 50 are excised as a propeptide. Residues proline 23–glycine 51 are disordered. The span at arginine 26–glycine 49 shows a compositional bias: basic and acidic residues. Disulfide bonds link cysteine 52–cysteine 68, cysteine 53–cysteine 58, and cysteine 54–cysteine 64. Positions arginine 70–leucine 72 are excised as a propeptide.

Belongs to the conotoxin A superfamily. Post-translationally, the disulfide bond Cys-52-Cys-68 (Cys I-VI), which corresponds to an extra disulfide bond when compared to the cysteine framework I (CC-C-C), does contribute to conotoxin SII stability and imparts a unique binding mode at the nAChR. As to expression, expressed by the venom duct.

Its subcellular location is the secreted. Alpha-conotoxins act on postsynaptic membranes, they bind to the nicotinic acetylcholine receptors (nAChR) and thus inhibit them. This toxin potently inhibits the rodent muscle nAChR (IC(50)=120 nM (adult subtype, alpha-1-beta-1-delta-epsilon/CHRNA1-CHRNB1-CHRND-CHRNE) and IC(50)=370 nM (fetal subtype, alpha-1-beta-1-gamma-delta/CHRNA1-CHRNB1-CHRNG-CHRND)) and weakly inhibits neuronal nAChRs. In contrast to alpha-conotoxins bearing 2 disulfide bonds (framework I), this conotoxin acts via a unique binding mode with the helix and the N- and C-termini buried in the binding pocket of muscle nAChRs. This chain is Alpha-conotoxin SII, found in Conus striatus (Striated cone).